The following is a 146-amino-acid chain: MRHGLAGRKLGVTASHRAAMFRNMAVALLKHEQITTTLPKAKELRPVAEKLITLGKRGGLHARRQAHALLRDDVIVAKLFDSLADRYKERQGGYTRVLKAGMRYGDAADMAVIELVDRDPAAKGQDSGPKPEVASDEDEAGEAAAA.

Residues 118-146 (RDPAAKGQDSGPKPEVASDEDEAGEAAAA) are disordered. The span at 134-146 (ASDEDEAGEAAAA) shows a compositional bias: acidic residues.

Belongs to the bacterial ribosomal protein bL17 family. Part of the 50S ribosomal subunit. Contacts protein L32.

In Acidiphilium cryptum (strain JF-5), this protein is Large ribosomal subunit protein bL17.